We begin with the raw amino-acid sequence, 337 residues long: tRNA N6-adenosine threonylcarbamoyltransferase (337 aa).

Residues His-111 and His-115 each coordinate Fe cation. Substrate is bound by residues Leu-134–Gly-138, Asp-167, Gly-180, and Asn-272. Asp-300 contributes to the Fe cation binding site.

This sequence belongs to the KAE1 / TsaD family. Fe(2+) serves as cofactor.

The protein localises to the cytoplasm. The enzyme catalyses L-threonylcarbamoyladenylate + adenosine(37) in tRNA = N(6)-L-threonylcarbamoyladenosine(37) in tRNA + AMP + H(+). Functionally, required for the formation of a threonylcarbamoyl group on adenosine at position 37 (t(6)A37) in tRNAs that read codons beginning with adenine. Is involved in the transfer of the threonylcarbamoyl moiety of threonylcarbamoyl-AMP (TC-AMP) to the N6 group of A37, together with TsaE and TsaB. TsaD likely plays a direct catalytic role in this reaction. The sequence is that of tRNA N6-adenosine threonylcarbamoyltransferase from Yersinia enterocolitica serotype O:8 / biotype 1B (strain NCTC 13174 / 8081).